Reading from the N-terminus, the 199-residue chain is Large ribosomal subunit protein uL5 (199 aa).

The protein belongs to the universal ribosomal protein uL5 family. In terms of assembly, part of the 50S ribosomal subunit; part of the 5S rRNA/L5/L18/L25 subcomplex. Contacts the 5S rRNA and the P site tRNA. Forms a bridge to the 30S subunit in the 70S ribosome.

In terms of biological role, this is one of the proteins that bind and probably mediate the attachment of the 5S RNA into the large ribosomal subunit, where it forms part of the central protuberance. In the 70S ribosome it contacts protein S13 of the 30S subunit (bridge B1b), connecting the 2 subunits; this bridge is implicated in subunit movement. Contacts the P site tRNA; the 5S rRNA and some of its associated proteins might help stabilize positioning of ribosome-bound tRNAs. The polypeptide is Large ribosomal subunit protein uL5 (Frankia casuarinae (strain DSM 45818 / CECT 9043 / HFP020203 / CcI3)).